Reading from the N-terminus, the 148-residue chain is Transcriptional regulator MraZ (148 aa).

SpoVT-AbrB domains lie at 5–53 (ETAI…AESE) and 82–125 (AAHL…SEQA).

It belongs to the MraZ family. As to quaternary structure, forms oligomers.

It localises to the cytoplasm. Its subcellular location is the nucleoid. This Stenotrophomonas maltophilia (strain R551-3) protein is Transcriptional regulator MraZ.